A 387-amino-acid polypeptide reads, in one-letter code: Acetate kinase (387 aa).

N14 is a binding site for Mg(2+). K21 is a binding site for ATP. Substrate is bound at residue R80. The Proton donor/acceptor role is filled by D137. Residues 197 to 201, 271 to 273, and 319 to 323 each bind ATP; these read HLGNG, DFR, and GIGEN. A Mg(2+)-binding site is contributed by E373.

Belongs to the acetokinase family. In terms of assembly, homodimer. The cofactor is Mg(2+). Mn(2+) serves as cofactor.

Its subcellular location is the cytoplasm. The catalysed reaction is acetate + ATP = acetyl phosphate + ADP. It functions in the pathway metabolic intermediate biosynthesis; acetyl-CoA biosynthesis; acetyl-CoA from acetate: step 1/2. Catalyzes the formation of acetyl phosphate from acetate and ATP. Can also catalyze the reverse reaction. In Mycobacterium avium (strain 104), this protein is Acetate kinase.